The sequence spans 925 residues: Protein translocase subunit SecA (925 aa).

Residues Gln87, 105–109, and Asp512 contribute to the ATP site; that span reads GEGKT. The Zn(2+) site is built by Cys910, Cys912, Cys921, and His922.

Belongs to the SecA family. Monomer and homodimer. Part of the essential Sec protein translocation apparatus which comprises SecA, SecYEG and auxiliary proteins SecDF-YajC and YidC. Zn(2+) is required as a cofactor.

Its subcellular location is the cell inner membrane. The protein localises to the cytoplasm. It carries out the reaction ATP + H2O + cellular proteinSide 1 = ADP + phosphate + cellular proteinSide 2.. Part of the Sec protein translocase complex. Interacts with the SecYEG preprotein conducting channel. Has a central role in coupling the hydrolysis of ATP to the transfer of proteins into and across the cell membrane, serving both as a receptor for the preprotein-SecB complex and as an ATP-driven molecular motor driving the stepwise translocation of polypeptide chains across the membrane. This Psychrobacter sp. (strain PRwf-1) protein is Protein translocase subunit SecA.